A 585-amino-acid polypeptide reads, in one-letter code: MAGUK p55 subfamily member 3 (585 aa).

2 L27 domains span residues 6 to 60 (EDSG…ERQS) and 61 to 118 (PTPV…FDPV). A PDZ domain is found at 137–212 (IVRLVKNKEP…LAQSQGSITL (76 aa)). An SH3 domain is found at 226-296 (ESKVFMRALF…PSKGFQERRL (71 aa)). A Phosphoserine modification is found at Ser307. The Guanylate kinase-like domain maps to 385–570 (PRLVVLIGSL…AYSQLKVVLE (186 aa)).

This sequence belongs to the MAGUK family. In terms of assembly, interacts with HTR2C; this interaction stabilizes the receptor at the plasma membrane and prevents the desensitization of the HTR2C receptor-mediated calcium response. Interacts with HTR2A. Interacts with HTR4. Interacts (via PDZ domain) with CADM1 (via C-terminus)Interacts (via PDZ domain) with CADM1; this interaction connects CADM1 with DLG1. Interacts (via Guanylate kinase-like domain) with PALS1. Interacts with DLG1 (via N-terminus); this interaction connects CADM1 with DLG1 and links CADM1 with the regulatory subunit of phosphoinositide-3-kinase (PI3K) by forming a multiprotein complex and participates in cell spreading. Expressed in retina (at protein level) at the subapical region (SAR) adjacent to adherens junctions at the OLM, and at the OPL.

It is found in the cell membrane. The protein localises to the apical cell membrane. The protein resides in the cell junction. It localises to the adherens junction. Participates in cell spreading through the phosphoinositide-3-kinase (PI3K) pathway by connecting CADM1 to DLG1 and the regulatory subunit of phosphoinositide-3-kinase (PI3K). Stabilizes HTR2C at the plasma membrane and prevents its desensitization. May participates in the maintenance of adherens junctions. The protein is MAGUK p55 subfamily member 3 of Homo sapiens (Human).